Consider the following 595-residue polypeptide: Estrogen receptor (595 aa).

The segment at 1–184 (MTMTLHTKAS…AMESAKETRY (184 aa)) is modulating (transactivation AF-1); mediates interaction with MACROD1. O-linked (GlcNAc) serine glycosylation is present at Ser10. A required for interaction with NCOA1 region spans residues 35 to 47 (LERPLGEVYVDGS). The interval 35 to 174 (LERPLGEVYV…LASTGDKGSM (140 aa)) is interaction with DDX5; self-association. Phosphoserine; by CDK2 is present on residues Ser104 and Ser106. Phosphoserine is present on Ser118. The interval 149–173 (FYRPTSDNRRQSGRERLASTGDKGS) is disordered. A compositionally biased stretch (basic and acidic residues) spans 154–165 (SDNRRQSGRERL). The residue at position 167 (Ser167) is a Phosphoserine; by CK2. 2 NR C4-type zinc fingers span residues 185–205 (CAVCNDYASGYHYGVWSCEGC) and 221–245 (CPATNQCTIDKNRRKSCQACRLRKC). Residues 185 to 250 (CAVCNDYASG…RLRKCYEVGM (66 aa)) constitute a DNA-binding region (nuclear receptor). Positions 185–310 (CAVCNDYASG…TKKNSPALSL (126 aa)) are mediates interaction with DNTTIP2. The tract at residues 251–310 (MKGGIRKDRRGGRMLKHKRQRDEGEGRNEVGSSGDVRASNLWPSPLLIKHTKKNSPALSL) is hinge. Residues 257–269 (KDRRGGRMLKHKR) show a composition bias toward basic residues. The tract at residues 257-287 (KDRRGGRMLKHKRQRDEGEGRNEVGSSGDVR) is disordered. Position 260 is an asymmetric dimethylarginine; by PRMT1 (Arg260). The interaction with AKAP13 stretch occupies residues 262–595 (GRMLKHKRQR…EEAGAFPTTV (334 aa)). The self-association stretch occupies residues 264-595 (MLKHKRQRDE…EEAGAFPTTV (332 aa)). One can recognise an NR LBD domain in the interval 311–547 (TADQMVSALL…DLLLEMLDAH (237 aa)). The tract at residues 311–595 (TADQMVSALL…EEAGAFPTTV (285 aa)) is transactivation AF-2. Residues Glu353 and Arg394 each contribute to the 17beta-estradiol site. Cys447 carries the S-palmitoyl cysteine lipid modification. His524 is a 17beta-estradiol binding site. A Phosphotyrosine; by Tyr-kinases modification is found at Tyr537. Thr571 carries O-linked (GlcNAc) threonine glycosylation.

The protein belongs to the nuclear hormone receptor family. NR3 subfamily. As to quaternary structure, binds DNA as a homodimer. Can form a heterodimer with ESR2. Interacts with coactivator NCOA5. Interacts with PELP1, the interaction is enhanced by 17-beta-estradiol; the interaction increases ESR1 transcriptional activity. Interacts with NCOA7; the interaction is ligand-inducible. Interacts with AKAP13, CUEDC2, HEXIM1, KDM5A, MAP1S, SMARD1, and UBE1C. Interacts with MUC1; the interaction is stimulated by 7 beta-estradiol (E2) and enhances ESR1-mediated transcription. Interacts with DNTTIP2, and UIMC1. Interacts with KMT2D/MLL2. Interacts with ATAD2; the interaction is enhanced by estradiol. Interacts with KIF18A and LDB1. Interacts with RLIM (via its C-terminus). Interacts with MACROD1. Interacts with SH2D4A and PLCG. Interacts with SH2D4A; the interaction blocks binding to PLCG and inhibits estrogen-induced cell proliferation. Interacts with DYNLL1. Interacts with CCDC62; the interaction requires estradiol and appears to enhance the transcription of target genes. Interacts with NR2C1; the interaction prevents homodimerization of ESR1 and suppresses its transcriptional activity and cell growth. Interacts with DNAAF4. Interacts with PRMT2. Interacts with RBFOX2. Interacts with EP300; the interaction is estrogen-dependent and enhanced by CITED1. Interacts with CITED1; the interaction is estrogen-dependent. Interacts with FAM120B, FOXL2, PHB2 and SLC30A9. Interacts with coactivators NCOA3 and NCOA6. Interacts with STK3/MST2 only in the presence of SAV1 and vice-versa. Binds to CSNK1D. Interacts with NCOA2; NCOA2 can interact with ESR1 AF-1 and AF-2 domains simultaneously and mediate their transcriptional synergy. Interacts with DDX5. Interacts with NCOA1; the interaction seems to require a self-association of N-terminal and C-terminal regions. Interacts with ZNF366, DDX17, NFKB1, RELA, SP1 and SP3. Interacts with NRIP1. Interacts with GPER1; the interaction occurs in an estrogen-dependent manner. Interacts with CLOCK and the interaction is stimulated by estrogen. Interacts with TRIP4 (ufmylated); estrogen dependent. Interacts with LMTK3; the interaction phosphorylates ESR1 (in vitro) and protects it against proteasomal degradation. Interacts with CCAR2 (via N-terminus) in a ligand-independent manner. Interacts with ZFHX3. Interacts with SFR1 in a ligand-dependent and -independent manner. Interacts with DCAF13, LATS1 and DCAF1; regulates ESR1 ubiquitination and ubiquitin-mediated proteasomal degradation. Interacts (via DNA-binding domain) with POU4F2 (C-terminus); this interaction increases the estrogen receptor ESR1 transcriptional activity in a DNA- and ligand 17-beta-estradiol-independent manner. Interacts with ESRRB isoform 1. Interacts with UBE3A and WBP2. Interacts with GTF2B. Interacts with RBM39. In the absence of hormonal ligand, interacts with TACC1. Interacts with PI3KR1 or PI3KR2 and PTK2/FAK1. Interacts with SRC. Interacts with BAG1; the interaction is promoted in the absence of estradiol (17-beta-estradiol/E2). Interacts with and ubiquitinated by STUB1; the interaction is promoted in the absence of estradiol (17-beta-estradiol/E2). Interacts with NEDD8. Ubiquitinated; regulated by LATS1 via DCAF1 it leads to ESR1 proteasomal degradation. Deubiquitinated by OTUB1. Ubiquitinated by STUB1/CHIP; in the CA1 hippocampal region following loss of endogenous circulating estradiol (17-beta-estradiol/E2). Ubiquitinated by UBR5, leading to its degradation: UBR5 specifically recognizes and binds ligand-bound ESR1 when it is not associated with coactivators (NCOAs). In presence of NCOAs, the UBR5-degron is not accessible, preventing its ubiquitination and degradation. In terms of processing, phosphorylated by cyclin A/CDK2 and CK1. Phosphorylation probably enhances transcriptional activity. Dephosphorylation at Ser-118 by PPP5C inhibits its transactivation activity. Phosphorylated by LMTK3 (in vitro). Post-translationally, palmitoylated at Cys-447 by ZDHHC7 and ZDHHC21. Palmitoylation is required for plasma membrane targeting and for rapid intracellular signaling via ERK and AKT kinases and cAMP generation, but not for signaling mediated by the nuclear hormone receptor. Dimethylated by PRMT1 at Arg-260. The methylation may favor cytoplasmic localization. Demethylated by JMJD6 at Arg-260.

The protein resides in the nucleus. It is found in the cytoplasm. The protein localises to the golgi apparatus. It localises to the cell membrane. Functionally, nuclear hormone receptor. The steroid hormones and their receptors are involved in the regulation of eukaryotic gene expression and affect cellular proliferation and differentiation in target tissues. Ligand-dependent nuclear transactivation involves either direct homodimer binding to a palindromic estrogen response element (ERE) sequence or association with other DNA-binding transcription factors, such as AP-1/c-Jun, c-Fos, ATF-2, Sp1 and Sp3, to mediate ERE-independent signaling. Ligand binding induces a conformational change allowing subsequent or combinatorial association with multiprotein coactivator complexes through LXXLL motifs of their respective components. Mutual transrepression occurs between the estrogen receptor (ER) and NF-kappa-B in a cell-type specific manner. Decreases NF-kappa-B DNA-binding activity and inhibits NF-kappa-B-mediated transcription from the IL6 promoter and displace RELA/p65 and associated coregulators from the promoter. Recruited to the NF-kappa-B response element of the CCL2 and IL8 promoters and can displace CREBBP. Present with NF-kappa-B components RELA/p65 and NFKB1/p50 on ERE sequences. Can also act synergistically with NF-kappa-B to activate transcription involving respective recruitment adjacent response elements; the function involves CREBBP. Can activate the transcriptional activity of TFF1. Also mediates membrane-initiated estrogen signaling involving various kinase cascades. Essential for MTA1-mediated transcriptional regulation of BRCA1 and BCAS3. Maintains neuronal survival in response to ischemic reperfusion injury when in the presence of circulating estradiol (17-beta-estradiol/E2). In Felis catus (Cat), this protein is Estrogen receptor (ESR1).